A 105-amino-acid chain; its full sequence is Small ribosomal subunit protein uS10 (105 aa).

This sequence belongs to the universal ribosomal protein uS10 family. As to quaternary structure, part of the 30S ribosomal subunit.

Involved in the binding of tRNA to the ribosomes. This is Small ribosomal subunit protein uS10 from Picosynechococcus sp. (strain ATCC 27264 / PCC 7002 / PR-6) (Agmenellum quadruplicatum).